A 94-amino-acid polypeptide reads, in one-letter code: Pyrimidine/purine nucleoside phosphorylase (94 aa).

The protein belongs to the nucleoside phosphorylase PpnP family.

The catalysed reaction is a purine D-ribonucleoside + phosphate = a purine nucleobase + alpha-D-ribose 1-phosphate. The enzyme catalyses adenosine + phosphate = alpha-D-ribose 1-phosphate + adenine. It catalyses the reaction cytidine + phosphate = cytosine + alpha-D-ribose 1-phosphate. It carries out the reaction guanosine + phosphate = alpha-D-ribose 1-phosphate + guanine. The catalysed reaction is inosine + phosphate = alpha-D-ribose 1-phosphate + hypoxanthine. The enzyme catalyses thymidine + phosphate = 2-deoxy-alpha-D-ribose 1-phosphate + thymine. It catalyses the reaction uridine + phosphate = alpha-D-ribose 1-phosphate + uracil. It carries out the reaction xanthosine + phosphate = alpha-D-ribose 1-phosphate + xanthine. Functionally, catalyzes the phosphorolysis of diverse nucleosides, yielding D-ribose 1-phosphate and the respective free bases. Can use uridine, adenosine, guanosine, cytidine, thymidine, inosine and xanthosine as substrates. Also catalyzes the reverse reactions. The chain is Pyrimidine/purine nucleoside phosphorylase from Alcanivorax borkumensis (strain ATCC 700651 / DSM 11573 / NCIMB 13689 / SK2).